Here is a 516-residue protein sequence, read N- to C-terminus: GMP synthase [glutamine-hydrolyzing] (516 aa).

In terms of domain architecture, Glutamine amidotransferase type-1 spans 10-201 (KIIVLDFGSQ…AFDVCGAVAN (192 aa)). The active-site Nucleophile is cysteine 87. Catalysis depends on residues histidine 175 and glutamate 177. One can recognise a GMPS ATP-PPase domain in the interval 202–391 (WTMADFIDMQ…LGIPHDLVWR (190 aa)). 229–235 (SGGVDSS) provides a ligand contact to ATP.

As to quaternary structure, homodimer.

It carries out the reaction XMP + L-glutamine + ATP + H2O = GMP + L-glutamate + AMP + diphosphate + 2 H(+). It participates in purine metabolism; GMP biosynthesis; GMP from XMP (L-Gln route): step 1/1. In terms of biological role, catalyzes the synthesis of GMP from XMP. The sequence is that of GMP synthase [glutamine-hydrolyzing] from Lactobacillus acidophilus (strain ATCC 700396 / NCK56 / N2 / NCFM).